The primary structure comprises 337 residues: tRNA N6-adenosine threonylcarbamoyltransferase (337 aa).

The Fe cation site is built by His111 and His115. Residues 134 to 138 (LVSGG), Asp167, Gly180, and Asn272 contribute to the substrate site. Residue Asp300 coordinates Fe cation.

This sequence belongs to the KAE1 / TsaD family. Requires Fe(2+) as cofactor.

It localises to the cytoplasm. It catalyses the reaction L-threonylcarbamoyladenylate + adenosine(37) in tRNA = N(6)-L-threonylcarbamoyladenosine(37) in tRNA + AMP + H(+). Its function is as follows. Required for the formation of a threonylcarbamoyl group on adenosine at position 37 (t(6)A37) in tRNAs that read codons beginning with adenine. Is involved in the transfer of the threonylcarbamoyl moiety of threonylcarbamoyl-AMP (TC-AMP) to the N6 group of A37, together with TsaE and TsaB. TsaD likely plays a direct catalytic role in this reaction. In Escherichia coli O157:H7, this protein is tRNA N6-adenosine threonylcarbamoyltransferase.